Here is a 370-residue protein sequence, read N- to C-terminus: MADNSTILEKLDGLVARFEEISTLITDPAVIADQKRYVKLTKEYKDLDDLMKARKEYIQLLGNIEEAKNILSNESDADMREMAKEEMDNSQERLPALEEEIKLMLVPADPQDSKNAILEIRGGAGGDEAAIFAGDLFRMYAKFCETKGWKMEVSNANEGTAGGYKEIVCSVTGDNVYGILKYESGVHRVQRVPATETQGRVHTSAASVAVLPEAEEFDVVINEGEIKWDTFRSGGAGGQNVNKVESGVRLRYIWKNPNTGVAEEILIECTETRDQPKNKERALARLRTFIYDKEHQKYIDDIASKRKTMVSTGDRSAKIRTYNYPQGRITDHRINYTIYNLAAFMDGDIQDCIDHLIVAENAERLKESEL.

Q239 is modified (N5-methylglutamine).

Belongs to the prokaryotic/mitochondrial release factor family. In terms of processing, methylated by PrmC. Methylation increases the termination efficiency of RF1.

Its subcellular location is the cytoplasm. Its function is as follows. Peptide chain release factor 1 directs the termination of translation in response to the peptide chain termination codons UAG and UAA. This Bacteroides thetaiotaomicron (strain ATCC 29148 / DSM 2079 / JCM 5827 / CCUG 10774 / NCTC 10582 / VPI-5482 / E50) protein is Peptide chain release factor 1.